Consider the following 66-residue polypeptide: Large ribosomal subunit protein uL29 (66 aa).

It belongs to the universal ribosomal protein uL29 family.

The protein is Large ribosomal subunit protein uL29 (rpmC) of Helicobacter pylori (strain J99 / ATCC 700824) (Campylobacter pylori J99).